A 231-amino-acid polypeptide reads, in one-letter code: Ubiquinone biosynthesis protein coq-4, mitochondrial (231 aa).

Zn(2+) is bound by residues histidine 133, aspartate 134, histidine 137, and glutamate 149.

It belongs to the COQ4 family. As to quaternary structure, component of a multi-subunit COQ enzyme complex. The cofactor is Zn(2+).

The protein resides in the mitochondrion inner membrane. It carries out the reaction a 4-hydroxy-3-methoxy-5-(all-trans-polyprenyl)benzoate + H(+) = a 2-methoxy-6-(all-trans-polyprenyl)phenol + CO2. It functions in the pathway cofactor biosynthesis; ubiquinone biosynthesis. Its function is as follows. Lyase that catalyzes the C1-decarboxylation of 4-hydroxy-3-methoxy-5-(all-trans-polyprenyl)benzoic acid into 2-methoxy-6-(all-trans-polyprenyl)phenol during ubiquinone biosynthesis. This chain is Ubiquinone biosynthesis protein coq-4, mitochondrial, found in Caenorhabditis elegans.